The chain runs to 202 residues: Xanthine phosphoribosyltransferase (202 aa).

Xanthine is bound by residues L20 and N27. 5-phospho-alpha-D-ribose 1-diphosphate is bound at residue 128–132 (ANGEA). K156 serves as a coordination point for xanthine.

Belongs to the purine/pyrimidine phosphoribosyltransferase family. Xpt subfamily. In terms of assembly, homodimer.

Its subcellular location is the cytoplasm. It catalyses the reaction XMP + diphosphate = xanthine + 5-phospho-alpha-D-ribose 1-diphosphate. The protein operates within purine metabolism; XMP biosynthesis via salvage pathway; XMP from xanthine: step 1/1. Converts the preformed base xanthine, a product of nucleic acid breakdown, to xanthosine 5'-monophosphate (XMP), so it can be reused for RNA or DNA synthesis. In Alkaliphilus metalliredigens (strain QYMF), this protein is Xanthine phosphoribosyltransferase.